We begin with the raw amino-acid sequence, 514 residues long: Flagellin B (514 aa).

It belongs to the bacterial flagellin family. In terms of assembly, heteromer of FlaA and FlaB. FlaB is located proximal to the hook while the remainder of the filament is composed of the predominant FlaA.

The protein localises to the secreted. Its subcellular location is the bacterial flagellum. Its function is as follows. Flagellin is the subunit protein which polymerizes to form the filaments of bacterial flagella. Important for motility and virulence. The polypeptide is Flagellin B (flaB) (Helicobacter pylori (strain J99 / ATCC 700824) (Campylobacter pylori J99)).